Here is a 208-residue protein sequence, read N- to C-terminus: Microtubule-associated protein Jupiter (208 aa).

2 disordered regions span residues 24-43 (RPPG…QTPR) and 82-106 (RGQK…PGKN). S30 is subject to Phosphoserine. The residue at position 41 (T41) is a Phosphothreonine. The segment covering 82-93 (RGQKTVDSHSRL) has biased composition (basic and acidic residues). A phosphothreonine mark is found at T98 and T102. Residues S111, S139, and S150 each carry the phosphoserine modification. The tract at residues 132-208 (HYNGKSGSVS…PPGGYSSGLW (77 aa)) is disordered. Positions 137–150 (SGSVSSASSSVSSS) are enriched in low complexity. Polar residues-rich tracts occupy residues 151-165 (TENL…SEGN) and 178-189 (EYSQRQESSNGG).

Belongs to the MAP Jupiter family. In terms of tissue distribution, ubiquitous expression throughout development. Expressed during cell division in the syncytial embryo. Expressed in developing photoreceptors of the eye imaginal disk of the third larval stage. In adults, highly expressed in neurons of the brain, concentrated in axons. In the adult ovaries, expression accumulates in the germarium and the polar follicular cells as well as in the oocyte along the microtubule network.

Its subcellular location is the nucleus. It localises to the cytoplasm. The protein localises to the cytoskeleton. The protein resides in the spindle. Functionally, binds to all microtubule populations. The polypeptide is Microtubule-associated protein Jupiter (Drosophila melanogaster (Fruit fly)).